Reading from the N-terminus, the 247-residue chain is Probable transcriptional regulatory protein Dalk_2958 (247 aa).

The protein belongs to the TACO1 family.

The protein resides in the cytoplasm. This chain is Probable transcriptional regulatory protein Dalk_2958, found in Desulfatibacillum aliphaticivorans.